The primary structure comprises 457 residues: Multidrug resistance protein MdtK (457 aa).

12 helical membrane-spanning segments follow: residues 11 to 31, 53 to 73, 93 to 113, 127 to 147, 160 to 180, 188 to 208, 239 to 259, 277 to 297, 316 to 336, 357 to 377, 387 to 407, and 418 to 438; these read LLAL…MGFV, IWLP…PVIA, WLVA…GHII, AIGY…FQVL, GMVI…IFIY, LGGV…YLLM, IAIG…FAVV, ALNF…AATI, RTAI…TIVL, LMLL…GSGV, IFFI…YLLA, and PSGF…MMAL.

It belongs to the multi antimicrobial extrusion (MATE) (TC 2.A.66.1) family. MdtK subfamily.

It is found in the cell inner membrane. In terms of biological role, multidrug efflux pump that functions probably as a Na(+)/drug antiporter. This chain is Multidrug resistance protein MdtK, found in Edwardsiella ictaluri (strain 93-146).